A 154-amino-acid chain; its full sequence is Iron-sulfur cluster assembly 2 homolog, mitochondrial (154 aa).

Residues 1–8 (MAAAWGSS) constitute a mitochondrion transit peptide. The segment at 29–49 (SLGPQARREASSSSPEAGEGQ) is disordered. Residues 39 to 49 (SSSSPEAGEGQ) are compositionally biased toward low complexity. Fe cation is bound by residues C79, C144, and C146.

The protein belongs to the HesB/IscA family. Heterotetramer; forms a dimer of dimers with IBA57. Interacts with [2Fe-2S]-ISCA2 forming the heterodimer [2Fe- 2S]-ISCA2-IBA57 complex; [2Fe-2S] cluster binding is absolutely required to promote the complex formation.

Its subcellular location is the mitochondrion. In terms of biological role, involved in the maturation of mitochondrial 4Fe-4S proteins functioning late in the iron-sulfur cluster assembly pathway. May be involved in the binding of an intermediate of Fe/S cluster assembly. This chain is Iron-sulfur cluster assembly 2 homolog, mitochondrial (ISCA2), found in Homo sapiens (Human).